A 132-amino-acid polypeptide reads, in one-letter code: Translation initiation factor 5A (132 aa).

At Lys-36 the chain carries Hypusine.

Belongs to the eIF-5A family.

It is found in the cytoplasm. Functionally, functions by promoting the formation of the first peptide bond. This chain is Translation initiation factor 5A (eIF5A), found in Desulfurococcus amylolyticus (strain DSM 18924 / JCM 16383 / VKM B-2413 / 1221n) (Desulfurococcus kamchatkensis).